We begin with the raw amino-acid sequence, 236 residues long: Lectin alpha chain (236 aa).

Residues Glu8 and Asp10 each contribute to the Mn(2+) site. Ca(2+)-binding residues include Asp10, Tyr12, Asn14, and Asp19. A carbohydrate is bound at residue Tyr12. Residues Asp19, His24, and Ser34 each contribute to the Mn(2+) site. 99 to 100 (LY) lines the a carbohydrate pocket. Asp207 is a binding site for Ca(2+). Arg227 serves as a coordination point for a carbohydrate.

The protein belongs to the leguminous lectin family. In terms of assembly, equilibrium between homodimer and homotetramer. Oligomerization is pH-dependent with homotetramers forming at pH 6.5 and above. The beta and gamma chains are produced by partial proteolytic processing of the lectin alpha chain by an asparaginyl endopeptidase. Mixture of 60% alpha lectin and 40% of its beta and gamma proteolytic fragments. Seed.

Functionally, D-mannose/D-glucose-binding lectin. Has anti-inflammatory activity in rats. Induces histamine release in mast cells from rat. Induces lymphocyte proliferation and IFNG production. This is Lectin alpha chain from Cratylia argentea (Cratylia floribunda).